The primary structure comprises 95 residues: Aspartyl/glutamyl-tRNA(Asn/Gln) amidotransferase subunit C (95 aa).

The protein belongs to the GatC family. As to quaternary structure, heterotrimer of A, B and C subunits.

The enzyme catalyses L-glutamyl-tRNA(Gln) + L-glutamine + ATP + H2O = L-glutaminyl-tRNA(Gln) + L-glutamate + ADP + phosphate + H(+). The catalysed reaction is L-aspartyl-tRNA(Asn) + L-glutamine + ATP + H2O = L-asparaginyl-tRNA(Asn) + L-glutamate + ADP + phosphate + 2 H(+). In terms of biological role, allows the formation of correctly charged Asn-tRNA(Asn) or Gln-tRNA(Gln) through the transamidation of misacylated Asp-tRNA(Asn) or Glu-tRNA(Gln) in organisms which lack either or both of asparaginyl-tRNA or glutaminyl-tRNA synthetases. The reaction takes place in the presence of glutamine and ATP through an activated phospho-Asp-tRNA(Asn) or phospho-Glu-tRNA(Gln). The protein is Aspartyl/glutamyl-tRNA(Asn/Gln) amidotransferase subunit C of Methylocella silvestris (strain DSM 15510 / CIP 108128 / LMG 27833 / NCIMB 13906 / BL2).